A 727-amino-acid chain; its full sequence is Probable metal-nicotianamine transporter YSL14 (727 aa).

Low complexity-rich tracts occupy residues 1–10 (MAQHTAAAAG) and 18–27 (AEAAAAAAAG). Residues 1–61 (MAQHTAAAAG…RNGGADDPDA (61 aa)) are disordered. Gly residues predominate over residues 45 to 54 (AGGGGGGRNG). A run of 14 helical transmembrane segments spans residues 84–104 (AFVVSALLAVMFSVIVMKLNL), 107–127 (GIIPSLNVSAGLLGFFFVRLW), 152–172 (CVVSAYGIAFSGGFGSYLFGM), 194–214 (LGWMIGFLFLVSFIGLFALVP), 256–276 (LGKYFLFSFFWGFFQWFYTAG), 314–334 (IVNVSVLLGGILSWGVMWPLI), 359–379 (VFISIALILGDGLYNFLKVLI), 432–452 (VAYGGYVVVAALSIGTLPEIF), 460–480 (ILVAYIVAPVLAFCNAYGSGL), 492–512 (LAIFVFGAWAGLSHGGVLVGL), 546–566 (FISQVIGTGMGCVIAPCVFWL), 604–624 (PENCLTLCYIFFAAAIAINLI), 646–666 (FYIGSYFAIDMFLGSVILFVW), and 681–701 (VASGLICGDGIWTLPQSILAL).

It belongs to the YSL (TC 2.A.67.2) family. In terms of tissue distribution, expressed in leaves and at low levels in roots.

Its subcellular location is the membrane. May be involved in the transport of nicotianamine-chelated metals. The sequence is that of Probable metal-nicotianamine transporter YSL14 (YSL14) from Oryza sativa subsp. japonica (Rice).